The primary structure comprises 262 residues: Tryptophan synthase alpha chain (262 aa).

Catalysis depends on proton acceptor residues Glu48 and Asp59.

It belongs to the TrpA family. As to quaternary structure, tetramer of two alpha and two beta chains.

It carries out the reaction (1S,2R)-1-C-(indol-3-yl)glycerol 3-phosphate + L-serine = D-glyceraldehyde 3-phosphate + L-tryptophan + H2O. It participates in amino-acid biosynthesis; L-tryptophan biosynthesis; L-tryptophan from chorismate: step 5/5. Functionally, the alpha subunit is responsible for the aldol cleavage of indoleglycerol phosphate to indole and glyceraldehyde 3-phosphate. This is Tryptophan synthase alpha chain from Helicobacter pylori (strain ATCC 700392 / 26695) (Campylobacter pylori).